The sequence spans 374 residues: Flap endonuclease 1 (374 aa).

The interval Met-1 to Arg-105 is N-domain. Asp-34 contacts Mg(2+). Residues Arg-47 and Arg-71 each contribute to the DNA site. 5 residues coordinate Mg(2+): Asp-87, Glu-159, Glu-161, Asp-180, and Asp-182. The segment at Asp-123–His-254 is I-domain. Residue Glu-159 coordinates DNA. The DNA site is built by Gly-232 and Asp-234. Asp-234 is a Mg(2+) binding site. Residues Val-339–Phe-347 are interaction with PCNA. A disordered region spans residues Asp-353–Lys-374.

The protein belongs to the XPG/RAD2 endonuclease family. FEN1 subfamily. In terms of assembly, interacts with PCNA. Three molecules of RAD27 bind to one PCNA trimer with each molecule binding to one PCNA monomer. PCNA stimulates the nuclease activity without altering cleavage specificity. Mg(2+) serves as cofactor. Phosphorylated. Phosphorylation upon DNA damage induces relocalization to the nuclear plasma.

It is found in the nucleus. The protein resides in the nucleolus. The protein localises to the nucleoplasm. It localises to the mitochondrion. Functionally, structure-specific nuclease with 5'-flap endonuclease and 5'-3' exonuclease activities involved in DNA replication and repair. During DNA replication, cleaves the 5'-overhanging flap structure that is generated by displacement synthesis when DNA polymerase encounters the 5'-end of a downstream Okazaki fragment. It enters the flap from the 5'-end and then tracks to cleave the flap base, leaving a nick for ligation. Also involved in the long patch base excision repair (LP-BER) pathway, by cleaving within the apurinic/apyrimidinic (AP) site-terminated flap. Acts as a genome stabilization factor that prevents flaps from equilibrating into structures that lead to duplications and deletions. Also possesses 5'-3' exonuclease activity on nicked or gapped double-stranded DNA, and exhibits RNase H activity. Also involved in replication and repair of rDNA and in repairing mitochondrial DNA. The chain is Flap endonuclease 1 from Candida tropicalis (strain ATCC MYA-3404 / T1) (Yeast).